Reading from the N-terminus, the 265-residue chain is Methylthioribulose-1-phosphate dehydratase (265 aa).

Cysteine 116 contributes to the substrate binding site. The Zn(2+) site is built by histidine 134 and histidine 136. Residue glutamate 159 is the Proton donor/acceptor of the active site. Residue histidine 224 coordinates Zn(2+).

This sequence belongs to the aldolase class II family. MtnB subfamily. It depends on Zn(2+) as a cofactor.

The protein resides in the cytoplasm. It catalyses the reaction 5-(methylsulfanyl)-D-ribulose 1-phosphate = 5-methylsulfanyl-2,3-dioxopentyl phosphate + H2O. It functions in the pathway amino-acid biosynthesis; L-methionine biosynthesis via salvage pathway; L-methionine from S-methyl-5-thio-alpha-D-ribose 1-phosphate: step 2/6. Catalyzes the dehydration of methylthioribulose-1-phosphate (MTRu-1-P) into 2,3-diketo-5-methylthiopentyl-1-phosphate (DK-MTP-1-P). This chain is Methylthioribulose-1-phosphate dehydratase, found in Debaryomyces hansenii (strain ATCC 36239 / CBS 767 / BCRC 21394 / JCM 1990 / NBRC 0083 / IGC 2968) (Yeast).